Consider the following 313-residue polypeptide: Aspartate carbamoyltransferase catalytic subunit (313 aa).

Carbamoyl phosphate is bound by residues Arg59 and Thr60. Lys87 is a binding site for L-aspartate. Residues Arg109, His137, and Gln140 each coordinate carbamoyl phosphate. Positions 170 and 224 each coordinate L-aspartate. Positions 265 and 266 each coordinate carbamoyl phosphate.

Belongs to the aspartate/ornithine carbamoyltransferase superfamily. ATCase family. Heterododecamer (2C3:3R2) of six catalytic PyrB chains organized as two trimers (C3), and six regulatory PyrI chains organized as three dimers (R2).

The catalysed reaction is carbamoyl phosphate + L-aspartate = N-carbamoyl-L-aspartate + phosphate + H(+). Its pathway is pyrimidine metabolism; UMP biosynthesis via de novo pathway; (S)-dihydroorotate from bicarbonate: step 2/3. Functionally, catalyzes the condensation of carbamoyl phosphate and aspartate to form carbamoyl aspartate and inorganic phosphate, the committed step in the de novo pyrimidine nucleotide biosynthesis pathway. The protein is Aspartate carbamoyltransferase catalytic subunit of Rhizobium meliloti (strain 1021) (Ensifer meliloti).